Here is a 369-residue protein sequence, read N- to C-terminus: Core histone macro-H2A.1 (369 aa).

Residues 2 to 117 (SSRGGKKKST…NIHPELLAKK (116 aa)) enclose the Histone H2A domain. N6-lactoyllysine; alternate is present on residues Lys7 and Lys9. Lys18 is subject to N6-methyllysine. An N6-acetyllysine; alternate modification is found at Lys116. A Glycyl lysine isopeptide (Lys-Gly) (interchain with G-Cter in ubiquitin); alternate cross-link involves residue Lys116. A Glycyl lysine isopeptide (Lys-Gly) (interchain with G-Cter in ubiquitin) cross-link involves residue Lys117. Lys123 carries the N6-acetyllysine; alternate modification. Lys123 bears the N6,N6-dimethyllysine; alternate mark. A Glycyl lysine isopeptide (Lys-Gly) (interchain with G-Cter in SUMO2); alternate cross-link involves residue Lys123. The interval 128–180 (ITPPPAKKAKSPSQKKPVAKKTGGKKGARKSKKKQGEVSKAASADSTTEGTPT) is disordered. Thr129 carries the post-translational modification Phosphothreonine. The span at 144–160 (PVAKKTGGKKGARKSKK) shows a compositional bias: basic residues. Lys167 is covalently cross-linked (Glycyl lysine isopeptide (Lys-Gly) (interchain with G-Cter in SUMO2)). A phosphoserine mark is found at Ser170 and Ser173. Residue Thr178 is modified to Phosphothreonine. A Macro domain is found at 184 to 367 (TVLSTKSLFL…IYVQEMAKLD (184 aa)). Residue Lys189 forms a Glycyl lysine isopeptide (Lys-Gly) (interchain with G-Cter in SUMO2) linkage. Asp203, Ile204, Val226, Ser275, Gly312, Ser313, Gly314, and Asn316 together coordinate a glycoprotein. Residue Lys320 forms a Glycyl lysine isopeptide (Lys-Gly) (interchain with G-Cter in SUMO2) linkage.

It belongs to the histone H2A family. The nucleosome is a histone octamer containing two molecules each of H2A, H2B, H3 and H4 assembled in one H3-H4 heterotetramer and two H2A-H2B heterodimers. Interacts with HDAC1 and HDAC2. Interacts with SPOP. Part of a complex consisting of MACROH2A1, CUL3 and SPOP. As to quaternary structure, interacts with PARP1. Monoubiquitinated at either Lys-116 or Lys-117. May also be polyubiquitinated. Ubiquitination is mediated by the CUL3/SPOP E3 complex and does not promote proteasomal degradation. Instead, it is required for enrichment in inactive X chromosome chromatin. As to expression, widely expressed, with high levels in testis. Present in liver, kidney and adrenal gland (at protein level). In the liver, present in hepatocytes and at a lesser extent in cells of the bile ducts. In the kidney, expressed in proximal and distal convoluted tubules and in straight proximal tubules. In the adrenal gland, present in inner cells of the cortex and medulla.

It localises to the nucleus. The protein resides in the chromosome. In terms of biological role, variant histone H2A which replaces conventional H2A in a subset of nucleosomes where it represses transcription. Nucleosomes wrap and compact DNA into chromatin, limiting DNA accessibility to the cellular machineries which require DNA as a template. Histones thereby play a central role in transcription regulation, DNA repair, DNA replication and chromosomal stability. DNA accessibility is regulated via a complex set of post-translational modifications of histones, also called histone code, and nucleosome remodeling. Involved in stable X chromosome inactivation. Inhibits the binding of transcription factors, including NF-kappa-B, and interferes with the activity of remodeling SWI/SNF complexes. Inhibits histone acetylation by EP300 and recruits class I HDACs, which induces a hypoacetylated state of chromatin. Functionally, isoform that specifically binds poly-ADP-ribose and O-acetyl-ADP-ribose and plays a key role in NAD(+) metabolism. Able to bind to the ends of poly-ADP-ribose chains created by PARP1 and cap them. This prevents PARP1 from further addition of ADP-ribose and thus limits the consumption of nuclear NAD(+), allowing the cell to maintain proper NAD(+) levels in both the nucleus and the mitochondria to promote proper mitochondrial respiration. Increases the expression of genes involved in redox metabolism, including SOD3. In contrast to isoform 1, does not bind poly-ADP-ribose. Represses SOD3 gene expression. The sequence is that of Core histone macro-H2A.1 from Mus musculus (Mouse).